The chain runs to 122 residues: MIQNESRLKVADNSGARELLVIRVLGGSKRKTGNIGDIVVCTVKQATPGGVVKKGDVVKAVIVRTKSGARREDGSYIKFDENAGVIINADKSPRGTRIFGPVARELREYDFMKIVSLAPEVL.

The protein belongs to the universal ribosomal protein uL14 family. Part of the 50S ribosomal subunit. Forms a cluster with proteins L3 and L19. In the 70S ribosome, L14 and L19 interact and together make contacts with the 16S rRNA in bridges B5 and B8.

In terms of biological role, binds to 23S rRNA. Forms part of two intersubunit bridges in the 70S ribosome. The polypeptide is Large ribosomal subunit protein uL14 (Lactobacillus helveticus (strain DPC 4571)).